The chain runs to 571 residues: Urease subunit alpha (571 aa).

Residues 133-571 (GGIDTHVHFI…LPLTQRYFLF (439 aa)) form the Urease domain. 3 residues coordinate Ni(2+): His-138, His-140, and Lys-221. Lys-221 carries the post-translational modification N6-carboxylysine. His-223 contributes to the substrate binding site. Ni(2+)-binding residues include His-250 and His-276. Catalysis depends on His-324, which acts as the Proton donor. Asp-364 lines the Ni(2+) pocket.

Belongs to the metallo-dependent hydrolases superfamily. Urease alpha subunit family. Heterotrimer of UreA (gamma), UreB (beta) and UreC (alpha) subunits. Three heterotrimers associate to form the active enzyme. Requires Ni cation as cofactor. Post-translationally, carboxylation allows a single lysine to coordinate two nickel ions.

Its subcellular location is the cytoplasm. It carries out the reaction urea + 2 H2O + H(+) = hydrogencarbonate + 2 NH4(+). Its pathway is nitrogen metabolism; urea degradation; CO(2) and NH(3) from urea (urease route): step 1/1. The chain is Urease subunit alpha from Staphylococcus saprophyticus subsp. saprophyticus (strain ATCC 15305 / DSM 20229 / NCIMB 8711 / NCTC 7292 / S-41).